The sequence spans 443 residues: Probable glycine dehydrogenase (decarboxylating) subunit 1 (443 aa).

Belongs to the GcvP family. N-terminal subunit subfamily. The glycine cleavage system is composed of four proteins: P, T, L and H. In this organism, the P 'protein' is a heterodimer of two subunits.

It catalyses the reaction N(6)-[(R)-lipoyl]-L-lysyl-[glycine-cleavage complex H protein] + glycine + H(+) = N(6)-[(R)-S(8)-aminomethyldihydrolipoyl]-L-lysyl-[glycine-cleavage complex H protein] + CO2. Functionally, the glycine cleavage system catalyzes the degradation of glycine. The P protein binds the alpha-amino group of glycine through its pyridoxal phosphate cofactor; CO(2) is released and the remaining methylamine moiety is then transferred to the lipoamide cofactor of the H protein. This is Probable glycine dehydrogenase (decarboxylating) subunit 1 from Solidesulfovibrio magneticus (strain ATCC 700980 / DSM 13731 / RS-1) (Desulfovibrio magneticus).